A 92-amino-acid polypeptide reads, in one-letter code: Arrestin-C (92 aa).

The protein belongs to the arrestin family. As to quaternary structure, homodimer; disulfide-linked in response to retinal illumination. Interacts with CXCR4; the interaction is dependent on the C-terminal phosphorylation of CXCR4 and modulates the calcium ion mobilization activity of CXCR4. Interacts with GPR84. Retina and pineal gland.

The protein localises to the photoreceptor inner segment. It localises to the cell projection. It is found in the cilium. Its subcellular location is the photoreceptor outer segment. Functionally, may play a role in an as yet undefined retina-specific signal transduction. Could bind to photoactivated-phosphorylated red/green opsins. The chain is Arrestin-C (Arr3) from Rattus norvegicus (Rat).